The primary structure comprises 255 residues: 5'-nucleotidase SurE (255 aa).

Residues Asp8, Asp9, Ser40, and Asn93 each contribute to the a divalent metal cation site.

This sequence belongs to the SurE nucleotidase family. Requires a divalent metal cation as cofactor.

Its subcellular location is the cytoplasm. It carries out the reaction a ribonucleoside 5'-phosphate + H2O = a ribonucleoside + phosphate. Its function is as follows. Nucleotidase that shows phosphatase activity on nucleoside 5'-monophosphates. This Nitrobacter hamburgensis (strain DSM 10229 / NCIMB 13809 / X14) protein is 5'-nucleotidase SurE.